A 395-amino-acid polypeptide reads, in one-letter code: Lipoyl synthase, mitochondrial (395 aa).

The transit peptide at 1–24 directs the protein to the mitochondrion; sequence MVKLPSASRIRSLATVPSTATRAF. Cys-107, Cys-112, Cys-118, Cys-137, Cys-141, Cys-144, and Ser-357 together coordinate [4Fe-4S] cluster. Residues 122–346 enclose the Radical SAM core domain; the sequence is GKGNATATIM…KNVAEGMGFL (225 aa).

Belongs to the radical SAM superfamily. Lipoyl synthase family. It depends on [4Fe-4S] cluster as a cofactor.

Its subcellular location is the mitochondrion. The enzyme catalyses [[Fe-S] cluster scaffold protein carrying a second [4Fe-4S](2+) cluster] + N(6)-octanoyl-L-lysyl-[protein] + 2 oxidized [2Fe-2S]-[ferredoxin] + 2 S-adenosyl-L-methionine + 4 H(+) = [[Fe-S] cluster scaffold protein] + N(6)-[(R)-dihydrolipoyl]-L-lysyl-[protein] + 4 Fe(3+) + 2 hydrogen sulfide + 2 5'-deoxyadenosine + 2 L-methionine + 2 reduced [2Fe-2S]-[ferredoxin]. The protein operates within protein modification; protein lipoylation via endogenous pathway; protein N(6)-(lipoyl)lysine from octanoyl-[acyl-carrier-protein]: step 2/2. Its function is as follows. Catalyzes the radical-mediated insertion of two sulfur atoms into the C-6 and C-8 positions of the octanoyl moiety bound to the lipoyl domains of lipoate-dependent enzymes, thereby converting the octanoylated domains into lipoylated derivatives. This is Lipoyl synthase, mitochondrial from Cryptococcus neoformans var. neoformans serotype D (strain B-3501A) (Filobasidiella neoformans).